The primary structure comprises 167 residues: Protein archease (167 aa).

Position 2 is an N-acetylalanine (Ala2). Asp39, Asp166, and Ile167 together coordinate Ca(2+).

This sequence belongs to the archease family. In terms of assembly, component of the tRNA-splicing ligase complex.

Functionally, component of the tRNA-splicing ligase complex required to facilitate the enzymatic turnover of catalytic subunit RTCB. Together with DDX1, acts by facilitating the guanylylation of RTCB, a key intermediate step in tRNA ligation. The protein is Protein archease (ZBTB8OS) of Homo sapiens (Human).